The following is a 184-amino-acid chain: Adenine phosphoribosyltransferase 2 (184 aa).

It belongs to the purine/pyrimidine phosphoribosyltransferase family. In terms of assembly, homodimer.

The protein localises to the cytoplasm. It catalyses the reaction AMP + diphosphate = 5-phospho-alpha-D-ribose 1-diphosphate + adenine. Its pathway is purine metabolism; AMP biosynthesis via salvage pathway; AMP from adenine: step 1/1. In terms of biological role, catalyzes a salvage reaction resulting in the formation of AMP, that is energically less costly than de novo synthesis. In Rhizobium etli (strain ATCC 51251 / DSM 11541 / JCM 21823 / NBRC 15573 / CFN 42), this protein is Adenine phosphoribosyltransferase 2.